Reading from the N-terminus, the 486-residue chain is MGEPGFFVTGDRAGGRSWCLRRVGMSAGWLLLEDGCEVTVGRGFGVTYQLVSKICPLMISRNHCVLKQNPEGQWTIMDNKSLNGVWLNRARLEPLSVYSIHQGDYIQLGVPLENKENAEYEYEVTEEDWETIYPCLSPKNDQVIEKNKELRTKRKFSLDELAGPGAEGPSNLKSKINKVSCESGQSVKSQGKGEVSSTPSENLDPKLTVLEPSKKTTGAPIYLGFPKVTEVHHEQTASNSSASQRGLQMFKVTMSRILRLKIQMQEKHEAVMNVKKQTQKGNSKKIVQMEQELLDLQSQLCAEQAQQQARVEQLEKTFQEEEQHLQDLEIAQGEEDLRQQLAQALQEHWALMEELNRSKKDFEAIIQAKNKELEQTKEEKEKVQAQKEEVLSHMNDVLENELQCIICSEYFIEAVTLNCAHSFCSYCINEWMKRKIECPICRKDIKSKTYSLVLDNCINKMVNNLSSEVKERRIVLIRERKVKRLF.

Positions 38-92 (VTVGRGFGVTYQLVSKICPLMISRNHCVLKQNPEGQWTIMDNKSLNGVWLNRARL) constitute an FHA domain. The tract at residues 68 to 72 (QNPEG) is required for interaction with PIWIL1. At Ser157 the chain carries Phosphoserine. Polar residues predominate over residues 180 to 201 (SCESGQSVKSQGKGEVSSTPSE). The disordered stretch occupies residues 180-207 (SCESGQSVKSQGKGEVSSTPSENLDPKL). The RING-type zinc finger occupies 404 to 442 (CIICSEYFIEAVTLNCAHSFCSYCINEWMKRKIECPICR).

This sequence belongs to the RNF8 family. As to quaternary structure, homodimer. Forms a E2-E3 ubiquitin ligase complex composed of the RNF8 homodimer and a E2 heterodimer of UBE2N and UBE2V2. Interacts with class III E2s, including UBE2E1, UBE2E2, and UBE2E3 and with UBE2N. Interacts with RXRA. Interacts (via FHA domain) with phosphorylated HERC2 (via C-terminus). Interacts with PIWIL1; leading to sequester RNF8 in the cytoplasm. Interacts with WRAP53/TCAB1. In terms of processing, autoubiquitinated through 'Lys-48' and 'Lys-63' of ubiquitin. 'Lys-63' polyubiquitination is mediated by UBE2N. 'Lys-29'-type polyubiquitination is also observed, but it doesn't require its own functional RING-type zinc finger.

Its subcellular location is the nucleus. It is found in the cytoplasm. The protein localises to the midbody. It localises to the chromosome. The protein resides in the telomere. The catalysed reaction is S-ubiquitinyl-[E2 ubiquitin-conjugating enzyme]-L-cysteine + [acceptor protein]-L-lysine = [E2 ubiquitin-conjugating enzyme]-L-cysteine + N(6)-ubiquitinyl-[acceptor protein]-L-lysine.. The protein operates within protein modification; protein ubiquitination. Functionally, E3 ubiquitin-protein ligase that plays a key role in DNA damage signaling via 2 distinct roles: by mediating the 'Lys-63'-linked ubiquitination of histones H2A and H2AX and promoting the recruitment of DNA repair proteins at double-strand breaks (DSBs) sites, and by catalyzing 'Lys-48'-linked ubiquitination to remove target proteins from DNA damage sites. Following DNA DSBs, it is recruited to the sites of damage by ATM-phosphorylated MDC1 and catalyzes the 'Lys-63'-linked ubiquitination of histones H2A and H2AX, thereby promoting the formation of TP53BP1 and BRCA1 ionizing radiation-induced foci (IRIF). Also controls the recruitment of UIMC1-BRCC3 (RAP80-BRCC36) and PAXIP1/PTIP to DNA damage sites. Promotes the recruitment of NBN to DNA damage sites by catalyzing 'Lys-6'-linked ubiquitination of NBN. Also recruited at DNA interstrand cross-links (ICLs) sites and catalyzes 'Lys-63'-linked ubiquitination of histones H2A and H2AX, leading to recruitment of FAAP20 and Fanconi anemia (FA) complex, followed by interstrand cross-link repair. H2A ubiquitination also mediates the ATM-dependent transcriptional silencing at regions flanking DSBs in cis, a mechanism to avoid collision between transcription and repair intermediates. Promotes the formation of 'Lys-63'-linked polyubiquitin chains via interactions with the specific ubiquitin-conjugating UBE2N/UBC13 and ubiquitinates non-histone substrates such as PCNA. Substrates that are polyubiquitinated at 'Lys-63' are usually not targeted for degradation. Also catalyzes the formation of 'Lys-48'-linked polyubiquitin chains via interaction with the ubiquitin-conjugating UBE2L6/UBCH8, leading to degradation of substrate proteins such as CHEK2, JMJD2A/KDM4A and KU80/XRCC5: it is still unclear how the preference toward 'Lys-48'- versus 'Lys-63'-linked ubiquitination is regulated but it could be due to RNF8 ability to interact with specific E2 specific ligases. For instance, interaction with phosphorylated HERC2 promotes the association between RNF8 and UBE2N/UBC13 and favors the specific formation of 'Lys-63'-linked ubiquitin chains. Promotes non-homologous end joining (NHEJ) by promoting the 'Lys-48'-linked ubiquitination and degradation the of KU80/XRCC5. Following DNA damage, mediates the ubiquitination and degradation of JMJD2A/KDM4A in collaboration with RNF168, leading to unmask H4K20me2 mark and promote the recruitment of TP53BP1 at DNA damage sites. Following DNA damage, mediates the ubiquitination and degradation of POLD4/p12, a subunit of DNA polymerase delta. In the absence of POLD4, DNA polymerase delta complex exhibits higher proofreading activity. In addition to its function in damage signaling, also plays a role in higher-order chromatin structure by mediating extensive chromatin decondensation. Involved in the activation of ATM by promoting histone H2B ubiquitination, which indirectly triggers histone H4 'Lys-16' acetylation (H4K16ac), establishing a chromatin environment that promotes efficient activation of ATM kinase. Required in the testis, where it plays a role in the replacement of histones during spermatogenesis. At uncapped telomeres, promotes the joining of deprotected chromosome ends by inducing H2A ubiquitination and TP53BP1 recruitment, suggesting that it may enhance cancer development by aggravating telomere-induced genome instability in case of telomeric crisis. Promotes the assembly of RAD51 at DNA DSBs in the absence of BRCA1 and TP53BP1 Also involved in class switch recombination in immune system, via its role in regulation of DSBs repair. May be required for proper exit from mitosis after spindle checkpoint activation and may regulate cytokinesis. May play a role in the regulation of RXRA-mediated transcriptional activity. Not involved in RXRA ubiquitination by UBE2E2. The protein is E3 ubiquitin-protein ligase RNF8 of Pongo abelii (Sumatran orangutan).